Here is an 88-residue protein sequence, read N- to C-terminus: Phosphocarrier protein HPr (88 aa).

The HPr domain occupies 1–88 (MKKFQAVIKD…KACLEKNKVI (88 aa)). H15 functions as the Pros-phosphohistidine intermediate in the catalytic mechanism. At S47 the chain carries Phosphoserine; by HPrK/P.

The protein belongs to the HPr family.

The protein resides in the cytoplasm. Phosphorylation on Ser-47 inhibits the phosphoryl transfer from enzyme I to HPr. In terms of biological role, general (non sugar-specific) component of the phosphoenolpyruvate-dependent sugar phosphotransferase system (sugar PTS). This major carbohydrate active-transport system catalyzes the phosphorylation of incoming sugar substrates concomitantly with their translocation across the cell membrane. The phosphoryl group from phosphoenolpyruvate (PEP) is transferred to the phosphoryl carrier protein HPr by enzyme I. Phospho-HPr then transfers it to the PTS EIIA domain. P-Ser-HPr interacts with the catabolite control protein A (CcpA), forming a complex that binds to DNA at the catabolite response elements cre, operator sites preceding a large number of catabolite-regulated genes. Thus, P-Ser-HPr is a corepressor in carbon catabolite repression (CCR), a mechanism that allows bacteria to coordinate and optimize the utilization of available carbon sources. P-Ser-HPr also plays a role in inducer exclusion, in which it probably interacts with several non-PTS permeases and inhibits their transport activity. The protein is Phosphocarrier protein HPr (ptsH) of Mycoplasma genitalium (strain ATCC 33530 / DSM 19775 / NCTC 10195 / G37) (Mycoplasmoides genitalium).